The following is a 454-amino-acid chain: Carbamoyl phosphate synthase arginine-specific small chain (454 aa).

A mitochondrion-targeting transit peptide spans methionine 1–methionine 29. The region spanning histidine 219–serine 406 is the Glutamine amidotransferase type-1 domain. Catalysis depends on cysteine 295, which acts as the Nucleophile. Active-site residues include histidine 379 and glutamate 381.

This sequence belongs to the CarA family. Heterodimer composed of 2 chains; the small (or glutamine) chain promotes the hydrolysis of glutamine to ammonia, which is used by the large (or ammonia) chain to synthesize carbamoyl phosphate.

Its subcellular location is the mitochondrion matrix. It carries out the reaction hydrogencarbonate + L-glutamine + 2 ATP + H2O = carbamoyl phosphate + L-glutamate + 2 ADP + phosphate + 2 H(+). It catalyses the reaction L-glutamine + H2O = L-glutamate + NH4(+). Its pathway is amino-acid biosynthesis; L-arginine biosynthesis; carbamoyl phosphate from bicarbonate: step 1/1. Its function is as follows. Small subunit of the arginine-specific carbamoyl phosphate synthase (CPSase). CPSase catalyzes the formation of carbamoyl phosphate from the ammonia moiety of glutamine, carbonate, and phosphate donated by ATP, the first step of the arginine biosynthetic pathway. The small subunit (glutamine amidotransferase) binds and cleaves glutamine to supply the large subunit with the substrate ammonia. This Emericella nidulans (strain FGSC A4 / ATCC 38163 / CBS 112.46 / NRRL 194 / M139) (Aspergillus nidulans) protein is Carbamoyl phosphate synthase arginine-specific small chain (cpa-1).